The following is a 1154-amino-acid chain: ATP-dependent helicase/deoxyribonuclease subunit B (1154 aa).

In terms of domain architecture, UvrD-like helicase ATP-binding spans 1 to 284 (MSVRFIIGRS…EQLRHNVRHK (284 aa)). Residue 8–15 (GRSGSGKT) coordinates ATP. The region spanning 279 to 583 (HNVRHKHEEL…QFSLVPPATD (305 aa)) is the UvrD-like helicase C-terminal domain. [4Fe-4S] cluster is bound by residues Cys-799, Cys-1120, Cys-1123, and Cys-1129.

It belongs to the helicase family. AddB/RexB type 1 subfamily. In terms of assembly, heterodimer of AddA and AddB. The cofactor is Mg(2+). [4Fe-4S] cluster serves as cofactor.

Its function is as follows. The heterodimer acts as both an ATP-dependent DNA helicase and an ATP-dependent, dual-direction single-stranded exonuclease. Recognizes the chi site generating a DNA molecule suitable for the initiation of homologous recombination. The AddB subunit has 5' -&gt; 3' nuclease activity but not helicase activity. This is ATP-dependent helicase/deoxyribonuclease subunit B from Anoxybacillus flavithermus (strain DSM 21510 / WK1).